The sequence spans 224 residues: Ribonuclease HII (224 aa).

The RNase H type-2 domain occupies 7–217 (STIMGIDEAG…SNAVIADCLQ (211 aa)). 3 residues coordinate a divalent metal cation: Asp-13, Glu-14, and Asp-111.

Belongs to the RNase HII family. The cofactor is Mn(2+). Requires Mg(2+) as cofactor.

It is found in the cytoplasm. It carries out the reaction Endonucleolytic cleavage to 5'-phosphomonoester.. Endonuclease that specifically degrades the RNA of RNA-DNA hybrids. This chain is Ribonuclease HII, found in Methanocella arvoryzae (strain DSM 22066 / NBRC 105507 / MRE50).